Here is a 737-residue protein sequence, read N- to C-terminus: Procollagen-lysine,2-oxoglutarate 5-dioxygenase 2 (737 aa).

The N-terminal stretch at 1–25 (MGGCTVKPQLLLLALVLHPWNPCLG) is a signal peptide. Asn63, Asn209, and Asn297 each carry an N-linked (GlcNAc...) asparagine glycan. Residue Thr320 is modified to Phosphothreonine. Tyr323 is subject to Phosphotyrosine. N-linked (GlcNAc...) asparagine glycans are attached at residues Asn365 and Asn522. The region spanning 644–737 (KGFALLNFVV…RYIAVSFIDP (94 aa)) is the Fe2OG dioxygenase domain. Fe cation is bound by residues His666 and Asp668. Asn696 is a glycosylation site (N-linked (GlcNAc...) asparagine). Residue Lys704 is modified to N6-succinyllysine. His718 provides a ligand contact to Fe cation. Asn725 carries an N-linked (GlcNAc...) asparagine glycan. The active site involves Arg728.

In terms of assembly, homodimer. Fe(2+) serves as cofactor. Requires L-ascorbate as cofactor. As to expression, highly expressed in pancreas and muscle. Isoform 1 and isoform 2 are expressed in the majority of the examined cell types. Isoform 2 is specifically expressed in skin, lung, dura and aorta.

Its subcellular location is the rough endoplasmic reticulum membrane. The enzyme catalyses L-lysyl-[collagen] + 2-oxoglutarate + O2 = (5R)-5-hydroxy-L-lysyl-[collagen] + succinate + CO2. Functionally, forms hydroxylysine residues in -Xaa-Lys-Gly- sequences in collagens. These hydroxylysines serve as sites of attachment for carbohydrate units and are essential for the stability of the intermolecular collagen cross-links. The chain is Procollagen-lysine,2-oxoglutarate 5-dioxygenase 2 from Homo sapiens (Human).